A 280-amino-acid chain; its full sequence is Lipase chaperone (280 aa).

Residues 5–22 traverse the membrane as a helical segment; that stretch reads ALTIITIASGSLGAVYFL.

The protein belongs to the lipase chaperone family.

The protein localises to the cell inner membrane. Functionally, may be involved in the folding of the extracellular lipase during its passage through the periplasm. This is Lipase chaperone (lifO) from Vibrio vulnificus (strain YJ016).